A 452-amino-acid chain; its full sequence is Glutamyl-tRNA(Gln) amidotransferase subunit A (452 aa).

Active-site charge relay system residues include lysine 56 and serine 131. Serine 155 acts as the Acyl-ester intermediate in catalysis.

The protein belongs to the amidase family. GatA subfamily. As to quaternary structure, heterotrimer of A, B and C subunits.

The enzyme catalyses L-glutamyl-tRNA(Gln) + L-glutamine + ATP + H2O = L-glutaminyl-tRNA(Gln) + L-glutamate + ADP + phosphate + H(+). Functionally, allows the formation of correctly charged Gln-tRNA(Gln) through the transamidation of misacylated Glu-tRNA(Gln) in organisms which lack glutaminyl-tRNA synthetase. The reaction takes place in the presence of glutamine and ATP through an activated gamma-phospho-Glu-tRNA(Gln). The sequence is that of Glutamyl-tRNA(Gln) amidotransferase subunit A from Campylobacter curvus (strain 525.92).